A 213-amino-acid polypeptide reads, in one-letter code: Adenylate kinase (213 aa).

Gly-10–Thr-15 serves as a coordination point for ATP. The interval Ser-30–Val-59 is NMP. AMP-binding positions include Thr-31, Arg-36, Ala-57 to Val-59, Gly-85 to Arg-88, and Gln-92. The interval Gly-126–Asp-163 is LID. An ATP-binding site is contributed by Arg-127. Positions 130 and 133 each coordinate Zn(2+). Ser-136–Tyr-137 lines the ATP pocket. 2 residues coordinate Zn(2+): Cys-150 and Cys-153. AMP-binding residues include Arg-160 and Arg-171. Gln-199 lines the ATP pocket.

Belongs to the adenylate kinase family. As to quaternary structure, monomer.

The protein resides in the cytoplasm. The enzyme catalyses AMP + ATP = 2 ADP. Its pathway is purine metabolism; AMP biosynthesis via salvage pathway; AMP from ADP: step 1/1. Functionally, catalyzes the reversible transfer of the terminal phosphate group between ATP and AMP. Plays an important role in cellular energy homeostasis and in adenine nucleotide metabolism. The polypeptide is Adenylate kinase (Desulforamulus reducens (strain ATCC BAA-1160 / DSM 100696 / MI-1) (Desulfotomaculum reducens)).